A 440-amino-acid chain; its full sequence is Enolase (440 aa).

(2R)-2-phosphoglycerate is bound at residue Gln-168. Glu-210 acts as the Proton donor in catalysis. Mg(2+) is bound by residues Asp-249, Glu-300, and Asp-326. (2R)-2-phosphoglycerate contacts are provided by Lys-351, Arg-380, Ser-381, and Lys-402. The Proton acceptor role is filled by Lys-351.

It belongs to the enolase family. Mg(2+) is required as a cofactor.

Its subcellular location is the cytoplasm. The protein resides in the secreted. It localises to the cell surface. The catalysed reaction is (2R)-2-phosphoglycerate = phosphoenolpyruvate + H2O. It functions in the pathway carbohydrate degradation; glycolysis; pyruvate from D-glyceraldehyde 3-phosphate: step 4/5. Catalyzes the reversible conversion of 2-phosphoglycerate (2-PG) into phosphoenolpyruvate (PEP). It is essential for the degradation of carbohydrates via glycolysis. In Ureaplasma parvum serovar 3 (strain ATCC 27815 / 27 / NCTC 11736), this protein is Enolase.